The chain runs to 274 residues: Beta-lysine N(6)-acetyltransferase (274 aa).

Residues 123 to 274 (FHLKIANETD…DMNFWYKLSE (152 aa)) enclose the N-acetyltransferase domain.

Belongs to the acetyltransferase family.

The enzyme catalyses (3S)-3,6-diaminohexanoate + acetyl-CoA = (3S)-6-acetamido-3-aminohexanoate + CoA + H(+). Catalyzes the acetylation of beta-lysine to N6-acetyl-beta-lysine, a compatible solute produced by methanogenic archaea that helps cells to cope with salt stress. The chain is Beta-lysine N(6)-acetyltransferase from Methanococcus maripaludis (strain DSM 14266 / JCM 13030 / NBRC 101832 / S2 / LL).